Consider the following 102-residue polypeptide: Large ribosomal subunit protein bL21 (102 aa).

Belongs to the bacterial ribosomal protein bL21 family. In terms of assembly, part of the 50S ribosomal subunit. Contacts protein L20.

In terms of biological role, this protein binds to 23S rRNA in the presence of protein L20. This is Large ribosomal subunit protein bL21 from Ehrlichia ruminantium (strain Welgevonden).